The chain runs to 380 residues: ATP phosphoribosyltransferase regulatory subunit (380 aa).

It belongs to the class-II aminoacyl-tRNA synthetase family. HisZ subfamily. As to quaternary structure, heteromultimer composed of HisG and HisZ subunits.

It is found in the cytoplasm. It participates in amino-acid biosynthesis; L-histidine biosynthesis; L-histidine from 5-phospho-alpha-D-ribose 1-diphosphate: step 1/9. Functionally, required for the first step of histidine biosynthesis. May allow the feedback regulation of ATP phosphoribosyltransferase activity by histidine. The chain is ATP phosphoribosyltransferase regulatory subunit from Thermoanaerobacter pseudethanolicus (strain ATCC 33223 / 39E) (Clostridium thermohydrosulfuricum).